A 267-amino-acid chain; its full sequence is NAD kinase 2 (267 aa).

The active-site Proton acceptor is the D52. Residues 52-53 (DA), 124-125 (NE), R151, D153, 164-169 (TAYNKS), and A188 contribute to the NAD(+) site.

Belongs to the NAD kinase family. The cofactor is a divalent metal cation.

It is found in the cytoplasm. It catalyses the reaction NAD(+) + ATP = ADP + NADP(+) + H(+). Involved in the regulation of the intracellular balance of NAD and NADP, and is a key enzyme in the biosynthesis of NADP. Catalyzes specifically the phosphorylation on 2'-hydroxyl of the adenosine moiety of NAD to yield NADP. The chain is NAD kinase 2 from Bacillus anthracis.